Here is a 674-residue protein sequence, read N- to C-terminus: Probable 3',5'-cyclic-AMP phosphodiesterase pde-4 (674 aa).

A disordered region spans residues 1–82 (MPRRRGSSSS…TSSASSYHPP (82 aa)). Over residues 15–24 (GGSGGGGGFG) the composition is skewed to gly residues. Residues 39-62 (RTSSPSASSTSRTPPAALPPRTSA) are compositionally biased toward low complexity. Over residues 66–78 (PGSNHKLTSSASS) the composition is skewed to polar residues. The PDEase domain occupies 328 to 660 (HVPEYGVNCA…EWYQSRIPEE (333 aa)). The active-site Proton donor is the H407. 4 residues coordinate a divalent metal cation: H411, H447, D448, and D565.

It belongs to the cyclic nucleotide phosphodiesterase family. It depends on a divalent metal cation as a cofactor. As to expression, expressed in dorsal D (DD) motor neurons and several other neurons at the L1 stage. Expression in DD neurons decreases gradually beginning in the late L1 stage. Highly expressed in adult ventral D (VD) motor neurons, but diminished in adult DD motor neurons.

It carries out the reaction 3',5'-cyclic AMP + H2O = AMP + H(+). Its function is as follows. Hydrolyzes the second messenger 3',5'-cyclic AMP (cAMP), which is a key regulator of many important physiological processes. Antagonizes dorsal D (DD) motor neuron respecification by reducing levels of cAMP. The protein is Probable 3',5'-cyclic-AMP phosphodiesterase pde-4 (pde-4) of Caenorhabditis elegans.